The chain runs to 379 residues: UDP-4-amino-4-deoxy-L-arabinose--oxoglutarate aminotransferase (379 aa).

The residue at position 182 (Lys182) is an N6-(pyridoxal phosphate)lysine.

The protein belongs to the DegT/DnrJ/EryC1 family. ArnB subfamily. In terms of assembly, homodimer. It depends on pyridoxal 5'-phosphate as a cofactor.

The enzyme catalyses UDP-4-amino-4-deoxy-beta-L-arabinose + 2-oxoglutarate = UDP-beta-L-threo-pentopyranos-4-ulose + L-glutamate. It functions in the pathway nucleotide-sugar biosynthesis; UDP-4-deoxy-4-formamido-beta-L-arabinose biosynthesis; UDP-4-deoxy-4-formamido-beta-L-arabinose from UDP-alpha-D-glucuronate: step 2/3. The protein operates within bacterial outer membrane biogenesis; lipopolysaccharide biosynthesis. Catalyzes the conversion of UDP-4-keto-arabinose (UDP-Ara4O) to UDP-4-amino-4-deoxy-L-arabinose (UDP-L-Ara4N). The modified arabinose is attached to lipid A and is required for resistance to polymyxin and cationic antimicrobial peptides. The sequence is that of UDP-4-amino-4-deoxy-L-arabinose--oxoglutarate aminotransferase from Escherichia coli O8 (strain IAI1).